Here is an 880-residue protein sequence, read N- to C-terminus: Alanine--tRNA ligase (880 aa).

Histidine 568, histidine 572, cysteine 670, and histidine 674 together coordinate Zn(2+).

The protein belongs to the class-II aminoacyl-tRNA synthetase family. It depends on Zn(2+) as a cofactor.

It localises to the cytoplasm. The catalysed reaction is tRNA(Ala) + L-alanine + ATP = L-alanyl-tRNA(Ala) + AMP + diphosphate. Functionally, catalyzes the attachment of alanine to tRNA(Ala) in a two-step reaction: alanine is first activated by ATP to form Ala-AMP and then transferred to the acceptor end of tRNA(Ala). Also edits incorrectly charged Ser-tRNA(Ala) and Gly-tRNA(Ala) via its editing domain. This is Alanine--tRNA ligase from Exiguobacterium sibiricum (strain DSM 17290 / CCUG 55495 / CIP 109462 / JCM 13490 / 255-15).